The sequence spans 203 residues: Urease accessory protein UreG (203 aa).

Residue 14 to 21 participates in GTP binding; the sequence is GPVGSGKT.

The protein belongs to the SIMIBI class G3E GTPase family. UreG subfamily. Homodimer. UreD, UreF and UreG form a complex that acts as a GTP-hydrolysis-dependent molecular chaperone, activating the urease apoprotein by helping to assemble the nickel containing metallocenter of UreC. The UreE protein probably delivers the nickel.

Its subcellular location is the cytoplasm. Facilitates the functional incorporation of the urease nickel metallocenter. This process requires GTP hydrolysis, probably effectuated by UreG. This Rhizobium leguminosarum bv. viciae protein is Urease accessory protein UreG.